Consider the following 482-residue polypeptide: Cardiolipin synthase (482 aa).

2 consecutive transmembrane segments (helical) span residues 4–24 (LAYLLVVLLILNVFFAAVTVF) and 34–54 (WAWLLVLTFVPIFGFIIYLIF). 2 consecutive PLD phosphodiesterase domains span residues 217 to 244 (LNYRNHRKLAIIDGDISYIGGFNIGDEY) and 395 to 422 (DNGFIHAKTLVVDGEIASVGTANMDFRS). Active-site residues include His222, Lys224, Asp229, His400, Lys402, and Asp407.

Belongs to the phospholipase D family. Cardiolipin synthase subfamily.

It localises to the cell membrane. The catalysed reaction is 2 a 1,2-diacyl-sn-glycero-3-phospho-(1'-sn-glycerol) = a cardiolipin + glycerol. Catalyzes the reversible phosphatidyl group transfer from one phosphatidylglycerol molecule to another to form cardiolipin (CL) (diphosphatidylglycerol) and glycerol. The sequence is that of Cardiolipin synthase (cls) from Listeria welshimeri serovar 6b (strain ATCC 35897 / DSM 20650 / CCUG 15529 / CIP 8149 / NCTC 11857 / SLCC 5334 / V8).